Here is a 147-residue protein sequence, read N- to C-terminus: Lysozyme C (147 aa).

The signal sequence occupies residues 1-18 (MKFFLILGFCLLPLIAQG). The region spanning 19-147 (KVFQRCELAA…VSQWIRGCRV (129 aa)) is the C-type lysozyme domain. Cystine bridges form between Cys24–Cys145, Cys48–Cys133, Cys82–Cys98, and Cys94–Cys112. Active-site residues include Glu53 and Asp70. Asp119 is a binding site for substrate.

Belongs to the glycosyl hydrolase 22 family. In terms of assembly, monomer. Expressed in liver and ovary. Not expressed in bone marrow, lung, spleen, intestine or oviduct.

It localises to the secreted. The enzyme catalyses Hydrolysis of (1-&gt;4)-beta-linkages between N-acetylmuramic acid and N-acetyl-D-glucosamine residues in a peptidoglycan and between N-acetyl-D-glucosamine residues in chitodextrins.. Lysozymes have primarily a bacteriolytic function; those in tissues and body fluids are associated with the monocyte-macrophage system and enhance the activity of immunoagents. Has bacteriolytic activity against M.luteus. The chain is Lysozyme C from Dromaius novaehollandiae (Emu).